We begin with the raw amino-acid sequence, 72 residues long: Small ribosomal subunit protein bS18 (72 aa).

Belongs to the bacterial ribosomal protein bS18 family. Part of the 30S ribosomal subunit. Forms a tight heterodimer with protein bS6.

Its function is as follows. Binds as a heterodimer with protein bS6 to the central domain of the 16S rRNA, where it helps stabilize the platform of the 30S subunit. The polypeptide is Small ribosomal subunit protein bS18 (Trichodesmium erythraeum (strain IMS101)).